Consider the following 402-residue polypeptide: UDP-N-acetylmuramoylalanine--D-glutamate ligase (402 aa).

97 to 103 (GTNGKTT) contacts ATP.

This sequence belongs to the MurCDEF family.

The protein localises to the cytoplasm. The catalysed reaction is UDP-N-acetyl-alpha-D-muramoyl-L-alanine + D-glutamate + ATP = UDP-N-acetyl-alpha-D-muramoyl-L-alanyl-D-glutamate + ADP + phosphate + H(+). It participates in cell wall biogenesis; peptidoglycan biosynthesis. In terms of biological role, cell wall formation. Catalyzes the addition of glutamate to the nucleotide precursor UDP-N-acetylmuramoyl-L-alanine (UMA). The chain is UDP-N-acetylmuramoylalanine--D-glutamate ligase from Campylobacter jejuni subsp. jejuni serotype O:23/36 (strain 81-176).